A 1072-amino-acid chain; its full sequence is DNA-directed RNA polymerase subunit beta (1072 aa).

It belongs to the RNA polymerase beta chain family. In terms of assembly, in plastids the minimal PEP RNA polymerase catalytic core is composed of four subunits: alpha, beta, beta', and beta''. When a (nuclear-encoded) sigma factor is associated with the core the holoenzyme is formed, which can initiate transcription.

Its subcellular location is the plastid. The protein localises to the chloroplast. It catalyses the reaction RNA(n) + a ribonucleoside 5'-triphosphate = RNA(n+1) + diphosphate. Functionally, DNA-dependent RNA polymerase catalyzes the transcription of DNA into RNA using the four ribonucleoside triphosphates as substrates. This is DNA-directed RNA polymerase subunit beta from Eucalyptus globulus subsp. globulus (Tasmanian blue gum).